The sequence spans 200 residues: Recombination protein RecR (200 aa).

The segment at 60-75 (CVYCQALTEDDVCNIC) adopts a C4-type zinc-finger fold. The Toprim domain maps to 83-177 (TKLCIIESML…KISRIGFGVP (95 aa)).

It belongs to the RecR family.

Its function is as follows. May play a role in DNA repair. It seems to be involved in an RecBC-independent recombinational process of DNA repair. It may act with RecF and RecO. This chain is Recombination protein RecR, found in Francisella tularensis subsp. novicida (strain U112).